We begin with the raw amino-acid sequence, 305 residues long: ATP synthase F(0) complex subunit B2, mitochondrial (305 aa).

A mitochondrion-targeting transit peptide spans 1-22; that stretch reads MSLSRCLPLGQNARVIIIPARL.

This sequence belongs to the eukaryotic ATPase B chain family. Subunit of the F-type ATPase which has 2 components, CF(1) - the catalytic core - and CF(0) - the membrane proton channel.

The protein resides in the mitochondrion. Its subcellular location is the mitochondrion inner membrane. Its function is as follows. Mitochondrial membrane ATP synthase (F(1)F(0) ATP synthase or Complex V) produces ATP from ADP in the presence of a proton gradient across the membrane which is generated by electron transport complexes of the respiratory chain. F-type ATPases consist of two structural domains, F(1) - containing the extramembraneous catalytic core, and F(0) - containing the membrane proton channel, linked together by a central stalk and a peripheral stalk. During catalysis, ATP synthesis in the catalytic domain of F(1) is coupled via a rotary mechanism of the central stalk subunits to proton translocation. Part of the complex F(0) domain and the peripheric stalk, which acts as a stator to hold the subunits of the catalytic subcomplexes relative to the rotary elements. Plays a role in somatic development. Does not play a role in germline development. The protein is ATP synthase F(0) complex subunit B2, mitochondrial of Caenorhabditis elegans.